The chain runs to 212 residues: Pyridoxine/pyridoxamine 5'-phosphate oxidase (212 aa).

Substrate is bound by residues 8–11 and Lys66; that span reads RTDY. Residues 61–66, 76–77, Lys83, and Gln105 contribute to the FMN site; these read RIVLLK and FT. Residues Tyr123, Arg127, and Ser131 each contribute to the substrate site. FMN contacts are provided by residues 140–141 and Trp184; that span reads QS. 190–192 is a binding site for substrate; the sequence is RLH. Arg194 lines the FMN pocket.

The protein belongs to the pyridoxamine 5'-phosphate oxidase family. In terms of assembly, homodimer. It depends on FMN as a cofactor.

It carries out the reaction pyridoxamine 5'-phosphate + O2 + H2O = pyridoxal 5'-phosphate + H2O2 + NH4(+). It catalyses the reaction pyridoxine 5'-phosphate + O2 = pyridoxal 5'-phosphate + H2O2. The protein operates within cofactor metabolism; pyridoxal 5'-phosphate salvage; pyridoxal 5'-phosphate from pyridoxamine 5'-phosphate: step 1/1. It participates in cofactor metabolism; pyridoxal 5'-phosphate salvage; pyridoxal 5'-phosphate from pyridoxine 5'-phosphate: step 1/1. In terms of biological role, catalyzes the oxidation of either pyridoxine 5'-phosphate (PNP) or pyridoxamine 5'-phosphate (PMP) into pyridoxal 5'-phosphate (PLP). In Ralstonia pickettii (strain 12J), this protein is Pyridoxine/pyridoxamine 5'-phosphate oxidase.